The primary structure comprises 58 residues: Small ribosomal subunit protein bS21 (58 aa).

The tract at residues 27–58 (GTLQELRKREHYEKPSVKRKRKSEAARKRKKY) is disordered. Over residues 31-42 (ELRKREHYEKPS) the composition is skewed to basic and acidic residues. A compositionally biased stretch (basic residues) spans 43–58 (VKRKRKSEAARKRKKY).

This sequence belongs to the bacterial ribosomal protein bS21 family.

The sequence is that of Small ribosomal subunit protein bS21 (rpsU) from Lactococcus lactis subsp. lactis (strain IL1403) (Streptococcus lactis).